The sequence spans 162 residues: 2-C-methyl-D-erythritol 2,4-cyclodiphosphate synthase (162 aa).

A divalent metal cation contacts are provided by Asp-10 and His-12. 4-CDP-2-C-methyl-D-erythritol 2-phosphate contacts are provided by residues 10 to 12 (DVH) and 36 to 37 (HS). A divalent metal cation is bound at residue His-44. 4-CDP-2-C-methyl-D-erythritol 2-phosphate contacts are provided by residues 58–60 (DIG), 63–67 (FPDTD), 102–108 (AQAPRMA), 134–137 (TTSE), Phe-141, and Arg-144.

Belongs to the IspF family. As to quaternary structure, homotrimer. The cofactor is a divalent metal cation.

It carries out the reaction 4-CDP-2-C-methyl-D-erythritol 2-phosphate = 2-C-methyl-D-erythritol 2,4-cyclic diphosphate + CMP. It participates in isoprenoid biosynthesis; isopentenyl diphosphate biosynthesis via DXP pathway; isopentenyl diphosphate from 1-deoxy-D-xylulose 5-phosphate: step 4/6. Involved in the biosynthesis of isopentenyl diphosphate (IPP) and dimethylallyl diphosphate (DMAPP), two major building blocks of isoprenoid compounds. Catalyzes the conversion of 4-diphosphocytidyl-2-C-methyl-D-erythritol 2-phosphate (CDP-ME2P) to 2-C-methyl-D-erythritol 2,4-cyclodiphosphate (ME-CPP) with a corresponding release of cytidine 5-monophosphate (CMP). The polypeptide is 2-C-methyl-D-erythritol 2,4-cyclodiphosphate synthase (Chromohalobacter salexigens (strain ATCC BAA-138 / DSM 3043 / CIP 106854 / NCIMB 13768 / 1H11)).